The following is a 286-amino-acid chain: Probable biotin transporter (286 aa).

2 EamA domains span residues 3–128 (YLLF…AIIR) and 139–277 (GFLL…LWVN). A run of 10 helical transmembrane segments spans residues 4-24 (LLFVTVLWAFSFNLIGEYLAG), 26-46 (VDSYFAVLTRVLLAGLVFLPL), 56-76 (FVGGVMLVGALQFGITYVCLY), 81-101 (VLTVPEVLLFTVLTPVHVALF), 109-129 (FNFWALAAALVAVLGAAIIRY), 136-156 (FLQGFLLLQLANATFAAGQVL), 174-194 (FGYFFVGALLVALPAWLLFGD), 203-223 (LQWGVLVWMGLLATALGQFWW), 234-254 (TLAVMNNLHVPVGLLLNLLIW), and 258-280 (ADLPRLALGGAVIVASLWVNRLG).

It belongs to the drug/metabolite transporter (DMT) superfamily. 10 TMS drug/metabolite exporter (DME) (TC 2.A.7.3) family.

The protein resides in the cell inner membrane. The catalysed reaction is biotin(in) = biotin(out). Uptake of biotin. The chain is Probable biotin transporter from Pseudomonas aeruginosa (strain ATCC 15692 / DSM 22644 / CIP 104116 / JCM 14847 / LMG 12228 / 1C / PRS 101 / PAO1).